A 157-amino-acid chain; its full sequence is SsrA-binding protein (157 aa).

Over residues 136-151 the composition is skewed to basic and acidic residues; that stretch reads KRETEKKRDWSREKGR. Residues 136–157 are disordered; it reads KRETEKKRDWSREKGRLLRARG.

Belongs to the SmpB family.

The protein localises to the cytoplasm. Its function is as follows. Required for rescue of stalled ribosomes mediated by trans-translation. Binds to transfer-messenger RNA (tmRNA), required for stable association of tmRNA with ribosomes. tmRNA and SmpB together mimic tRNA shape, replacing the anticodon stem-loop with SmpB. tmRNA is encoded by the ssrA gene; the 2 termini fold to resemble tRNA(Ala) and it encodes a 'tag peptide', a short internal open reading frame. During trans-translation Ala-aminoacylated tmRNA acts like a tRNA, entering the A-site of stalled ribosomes, displacing the stalled mRNA. The ribosome then switches to translate the ORF on the tmRNA; the nascent peptide is terminated with the 'tag peptide' encoded by the tmRNA and targeted for degradation. The ribosome is freed to recommence translation, which seems to be the essential function of trans-translation. This is SsrA-binding protein from Rhodopseudomonas palustris (strain HaA2).